The chain runs to 344 residues: Meiotic expression up-regulated protein 26 (344 aa).

It is found in the nucleus. This chain is Meiotic expression up-regulated protein 26 (meu26), found in Schizosaccharomyces pombe (strain 972 / ATCC 24843) (Fission yeast).